Reading from the N-terminus, the 74-residue chain is Small ribosomal subunit protein bS18 (74 aa).

The protein belongs to the bacterial ribosomal protein bS18 family. As to quaternary structure, part of the 30S ribosomal subunit. Forms a tight heterodimer with protein bS6.

Binds as a heterodimer with protein bS6 to the central domain of the 16S rRNA, where it helps stabilize the platform of the 30S subunit. The polypeptide is Small ribosomal subunit protein bS18 (Novosphingobium aromaticivorans (strain ATCC 700278 / DSM 12444 / CCUG 56034 / CIP 105152 / NBRC 16084 / F199)).